Reading from the N-terminus, the 430-residue chain is Nucleoporin NUP42 (430 aa).

Positions 1-68 (MSAFGNPFTS…AFGMPQFGTN (68 aa)) are disordered. The stretch at 2-5 (SAFG) is one SXFG 1 repeat. Positions 15–36 (NLSNTSGINPFTNNAASTNNMG) are enriched in polar residues. 2 SAFGXPXFG repeats span residues 38-46 (SAFGRPSFG) and 58-66 (SAFGMPQFG). The segment covering 45 to 68 (FGTANTMTGGTTTSAFGMPQFGTN) has biased composition (low complexity). One copy of the SXFG 2 repeat lies at 78–81 (SAFG). SAFGXPXFG repeat units follow at residues 90–98 (SAFGAPAFG) and 112–120 (SAFGAPSFG). The tract at residues 121–230 (STGFGAMAAT…QNTSTSSGTG (110 aa)) is interactions with CRM1 and GFD1. FG repeat units lie at residues 124–125 (FG) and 134–135 (FG). Serine 137 is subject to Phosphoserine. Residues 143–151 (SAFGQPAFG) form an SAFGXPXFG 5 repeat. SXFG repeat units lie at residues 168 to 171 (SAFG) and 182 to 185 (SPFG). A disordered region spans residues 180 to 294 (TTSPFGSLQQ…QSPFSGGSGG (115 aa)). A compositionally biased stretch (low complexity) spans 186 to 201 (SLQQNASQNASSTSSA). An SAFGXPXFG 6 repeat occupies 200 to 208 (SAFGKPTFG). The segment covering 209 to 230 (AATNTQSPFGTIQNTSTSSGTG) has biased composition (polar residues). SXFG repeat units lie at residues 215–218 (SPFG) and 232–235 (SPFG). Polar residues-rich tracts occupy residues 237 to 252 (FGTNSNNKSPFSNLQS) and 260 to 285 (PFGTTTSKANNNNNVGSSAFGTTNNQ). SXFG repeat units lie at residues 259-262 (SPFG) and 277-280 (SAFG). Residues 296 to 297 (FG) form an FG 3 repeat. Serine 298 carries the post-translational modification Phosphoserine. The stretch at 312–315 (SSFG) is one SXFG 9 repeat. FG repeat units follow at residues 319-322 (FSFG), 339-340 (FG), and 361-364 (FGFG). Residues 319-346 (FSFGITPQNDANKVSQSNPSFGQTMPNT) form a disordered region. The segment covering 323–346 (ITPQNDANKVSQSNPSFGQTMPNT) has biased composition (polar residues). Residues 365–430 (QQQMNATNVN…DIPPPPALVA (66 aa)) form an interaction with GLE1 region.

In terms of assembly, component of the nuclear pore complex (NPC). NPC constitutes the exclusive means of nucleocytoplasmic transport. NPCs allow the passive diffusion of ions and small molecules and the active, nuclear transport receptor-mediated bidirectional transport of macromolecules such as proteins, RNAs, ribonucleoparticles (RNPs), and ribosomal subunits across the nuclear envelope. Due to its 8-fold rotational symmetry, all subunits are present with 8 copies or multiples thereof. NUP42 interacts with the NUP82 subcomplex. It interacts directly with GLE1, and through its FG repeats with GFD1, the heterodimeric mRNA transport factor MEX67/MTR2, and the karyopherin CRM1.

Its subcellular location is the nucleus. It localises to the nuclear pore complex. It is found in the nucleus membrane. Its function is as follows. Functions as a component of the nuclear pore complex (NPC). NPC components, collectively referred to as nucleoporins (NUPs), can play the role of both NPC structural components and of docking or interaction partners for transiently associated nuclear transport factors. Active directional transport is assured by both, a Phe-Gly (FG) repeat affinity gradient for these transport factors across the NPC and a transport cofactor concentration gradient across the nuclear envelope (GSP1 and GSP2 GTPases associated predominantly with GTP in the nucleus, with GDP in the cytoplasm). NUP42 is specifically important for nuclear protein and mRNA export. The sequence is that of Nucleoporin NUP42 (NUP42) from Saccharomyces cerevisiae (strain ATCC 204508 / S288c) (Baker's yeast).